An 89-amino-acid polypeptide reads, in one-letter code: UPF0147 protein Saci_0891 (89 aa).

It belongs to the UPF0147 family.

The chain is UPF0147 protein Saci_0891 from Sulfolobus acidocaldarius (strain ATCC 33909 / DSM 639 / JCM 8929 / NBRC 15157 / NCIMB 11770).